A 117-amino-acid polypeptide reads, in one-letter code: ORF2 protein (117 aa).

Residues 43-104 are disordered; that stretch reads NLGRPPAPQP…AGDGGDGELA (62 aa). Residues 79–98 show a composition bias toward gly residues; sequence GTGGDAAGGEAGGSRGAGDG.

The protein is ORF2 protein of Homo sapiens (Human).